Here is a 351-residue protein sequence, read N- to C-terminus: MSKKTSLTPEEMRREALNTALSTIERKYGSGSVMKLSDDAHTNVAVIPSGSIGLDLALGVGGIPRGRVTEIYGPESSGKTTLALHMIAECQKQGGTAAFIDAEHALDINYARRLGVKTDEMLISQPDYGEQALDIADMLVRSNAVDVVVIDSVAALIPQSELEGNMGETQVGSQARLMSHAMRKLTGTIHKSRTSVIFINQIRMKIGTMGYGSPETTTGGNALKFYCSVRIDVRKIQTLKDKEEVYGNRVRVKIVKNKVAPPFREAQFDILYGQGVSRTGELIDLGVETGIVEKSGAWYAFGSERLGQGKENVRQMLQENTTLREAIEQKLLEHLGMREPVQSADEAEKQD.

73-80 (GPESSGKT) is a binding site for ATP.

The protein belongs to the RecA family.

It is found in the cytoplasm. Can catalyze the hydrolysis of ATP in the presence of single-stranded DNA, the ATP-dependent uptake of single-stranded DNA by duplex DNA, and the ATP-dependent hybridization of homologous single-stranded DNAs. It interacts with LexA causing its activation and leading to its autocatalytic cleavage. The protein is Protein RecA of Oleidesulfovibrio alaskensis (strain ATCC BAA-1058 / DSM 17464 / G20) (Desulfovibrio alaskensis).